The following is a 230-amino-acid chain: MSRASLEKDPREVATMFDAVGKNYDITNTVLSFGQDRLWRKRTRRRLDLAPGDKVLDLAAGTGVSTEELAESGAYCVAADFSLGMLRAGSHRDVPMICADGLNLPFADNTFDAVTISYGLRNLVDFRAGLREMARVTKPGGKLAIAEFSTPVIPGFATVYKEYLMRALPAVAKVVSSNPESYVYLAESIRAWPDQEELAREIRANGWENVGWQNLTGGIVALHSGTKPLD.

Residues Thr62, Asp80, 100 to 101, and Ser117 contribute to the S-adenosyl-L-methionine site; that span reads DG.

This sequence belongs to the class I-like SAM-binding methyltransferase superfamily. MenG/UbiE family.

It carries out the reaction a 2-demethylmenaquinol + S-adenosyl-L-methionine = a menaquinol + S-adenosyl-L-homocysteine + H(+). It functions in the pathway quinol/quinone metabolism; menaquinone biosynthesis; menaquinol from 1,4-dihydroxy-2-naphthoate: step 2/2. Methyltransferase required for the conversion of demethylmenaquinol (DMKH2) to menaquinol (MKH2). The protein is Demethylmenaquinone methyltransferase of Corynebacterium urealyticum (strain ATCC 43042 / DSM 7109).